The chain runs to 287 residues: 2-dehydro-3-deoxyphosphooctonate aldolase (287 aa).

Belongs to the KdsA family.

The protein localises to the cytoplasm. The catalysed reaction is D-arabinose 5-phosphate + phosphoenolpyruvate + H2O = 3-deoxy-alpha-D-manno-2-octulosonate-8-phosphate + phosphate. It participates in carbohydrate biosynthesis; 3-deoxy-D-manno-octulosonate biosynthesis; 3-deoxy-D-manno-octulosonate from D-ribulose 5-phosphate: step 2/3. The protein operates within bacterial outer membrane biogenesis; lipopolysaccharide biosynthesis. This Rhodopseudomonas palustris (strain HaA2) protein is 2-dehydro-3-deoxyphosphooctonate aldolase.